The chain runs to 315 residues: Leukocidin-S subunit (315 aa).

The first 29 residues, 1 to 29 (MLKNKILATTLSVSLLAPLANPLLENAKA), serve as a signal peptide directing secretion.

It belongs to the aerolysin family. Leukocidin consists of two protein components: F and S.

Leukocidin causes cytotoxic changes in polymorphonuclear leukocytes. This Staphylococcus aureus protein is Leukocidin-S subunit (lukS).